We begin with the raw amino-acid sequence, 288 residues long: MQAYLNLCRDILNYGKKKIDRTKTGTRSIFGYQMRFNLEKGFPLLTTKKMNFKAIIHELLWFIKGDTNIRYLVQNNVNIWNEWPYQKYCNSNFFQNLTLQEFIDKIIIDEKFAKIHGDLGPIYGHQWRNFQGIDQLTDLISEIKKNPHSRRLILTAWDPTVIKDMLLPPCHVMIQCYVEKNKISMQLYQRSGDVFLGIPFNIASYSLLLIIIAQCTGLKPFEFIHTIGDAHIYNNHIEQIQKQIKRIPKKLPIMTLNPHIIDINQFTFNDFNLEKYESYGILKGVVAV.

Position 21 (R21) interacts with dUMP. Position 51 (N51) interacts with (6R)-5,10-methylene-5,6,7,8-tetrahydrofolate. 150–151 (RR) serves as a coordination point for dUMP. Residue C170 is the Nucleophile of the active site. Residues 190 to 193 (RSGD), N201, and 231 to 233 (HIY) each bind dUMP. Residue D193 coordinates (6R)-5,10-methylene-5,6,7,8-tetrahydrofolate. Residue A287 coordinates (6R)-5,10-methylene-5,6,7,8-tetrahydrofolate.

This sequence belongs to the thymidylate synthase family. Bacterial-type ThyA subfamily. Homodimer.

It localises to the cytoplasm. It catalyses the reaction dUMP + (6R)-5,10-methylene-5,6,7,8-tetrahydrofolate = 7,8-dihydrofolate + dTMP. Its pathway is pyrimidine metabolism; dTTP biosynthesis. In terms of biological role, catalyzes the reductive methylation of 2'-deoxyuridine-5'-monophosphate (dUMP) to 2'-deoxythymidine-5'-monophosphate (dTMP) while utilizing 5,10-methylenetetrahydrofolate (mTHF) as the methyl donor and reductant in the reaction, yielding dihydrofolate (DHF) as a by-product. This enzymatic reaction provides an intracellular de novo source of dTMP, an essential precursor for DNA biosynthesis. The protein is Thymidylate synthase of Phytoplasma mali (strain AT).